The primary structure comprises 423 residues: MRFLRRQTRRLRSIWQRSLPVRFRRGKLHTQLVTICLYATVFLNILYGVYLGRFSFRRKKFVFSKGLTIYSLFVATFFALFYIWNIYNEISTGQINLRDTIGIYCYMNVCVCLFNYVTQWEKTLQIIRFQNSVPLFKVLDSLDISAMIVWRAFIYGLLKIVFCPLITYITLILYHRRSISESQWTSVTTTKTMLPLIVSNQINNCFFGGLVLANLIFAAVNRKLHGIVKEANMLQSPVQMNLHKPYYRMRRFCELADLLDELARKYGFTASRSKNYLRFTDWSMVLSMLMNLLGITMGCYNQYLAIADHYINEEPFDLFLAIVLVVFLAVPFLELVMVARISNQTLTRRTGELLQRFDLQHADARFKQVVNAFWLQVVTINYKLMPLGLLELNTSLVNKVFSSAIGSLLILIQSDLTLRFSLK.

Residues 1–31 lie on the Cytoplasmic side of the membrane; sequence MRFLRRQTRRLRSIWQRSLPVRFRRGKLHTQ. Residues 32–52 form a helical membrane-spanning segment; the sequence is LVTICLYATVFLNILYGVYLG. The Extracellular portion of the chain corresponds to 53–65; that stretch reads RFSFRRKKFVFSK. Residues 66-86 form a helical membrane-spanning segment; it reads GLTIYSLFVATFFALFYIWNI. Topologically, residues 87 to 99 are cytoplasmic; the sequence is YNEISTGQINLRD. The chain crosses the membrane as a helical span at residues 100 to 120; sequence TIGIYCYMNVCVCLFNYVTQW. Residues 121-152 lie on the Extracellular side of the membrane; the sequence is EKTLQIIRFQNSVPLFKVLDSLDISAMIVWRA. The chain crosses the membrane as a helical span at residues 153–173; the sequence is FIYGLLKIVFCPLITYITLIL. Residues 174-200 are Cytoplasmic-facing; sequence YHRRSISESQWTSVTTTKTMLPLIVSN. Residues 201–221 traverse the membrane as a helical segment; the sequence is QINNCFFGGLVLANLIFAAVN. The Extracellular portion of the chain corresponds to 222–278; the sequence is RKLHGIVKEANMLQSPVQMNLHKPYYRMRRFCELADLLDELARKYGFTASRSKNYLR. The chain crosses the membrane as a helical span at residues 279-299; the sequence is FTDWSMVLSMLMNLLGITMGC. Over 300 to 317 the chain is Cytoplasmic; the sequence is YNQYLAIADHYINEEPFD. The chain crosses the membrane as a helical span at residues 318-338; it reads LFLAIVLVVFLAVPFLELVMV. The Extracellular segment spans residues 339–423; that stretch reads ARISNQTLTR…SDLTLRFSLK (85 aa). 2 N-linked (GlcNAc...) asparagine glycosylation sites follow: Asn343 and Asn393.

This sequence belongs to the insect chemoreceptor superfamily. Gustatory receptor (GR) family. Gr22e subfamily. In larvae, is expressed in neurons of the terminal external chemosensory organ.

It is found in the cell membrane. Its function is as follows. Probable gustatory receptor which mediates acceptance or avoidance behavior, depending on its substrates. This is Putative gustatory receptor 97a (Gr97a) from Drosophila melanogaster (Fruit fly).